A 269-amino-acid chain; its full sequence is uncharacterized protein (269 aa).

The HTH gntR-type domain occupies 5–73 (APKWRELADR…RGHGTVVRRK (69 aa)). The segment at residues 33–52 (IRDLVEAGEGSKETVHRAYK) is a DNA-binding region (H-T-H motif).

In terms of biological role, the imp locus inhibits the extrachromosomal maintenance of the Streptomyces plasmid SLP1. This is an uncharacterized protein from Streptomyces coelicolor (strain ATCC BAA-471 / A3(2) / M145).